The chain runs to 234 residues: Putative N-acetylmannosamine-6-phosphate 2-epimerase (234 aa).

The protein belongs to the NanE family.

The catalysed reaction is an N-acyl-D-glucosamine 6-phosphate = an N-acyl-D-mannosamine 6-phosphate. Its pathway is amino-sugar metabolism; N-acetylneuraminate degradation; D-fructose 6-phosphate from N-acetylneuraminate: step 3/5. In terms of biological role, converts N-acetylmannosamine-6-phosphate (ManNAc-6-P) to N-acetylglucosamine-6-phosphate (GlcNAc-6-P). The protein is Putative N-acetylmannosamine-6-phosphate 2-epimerase of Klebsiella pneumoniae subsp. pneumoniae (strain ATCC 700721 / MGH 78578).